Consider the following 212-residue polypeptide: ATP-dependent dethiobiotin synthetase BioD (212 aa).

Residue 13–18 (GIGKTV) participates in ATP binding. Mg(2+) is bound at residue threonine 17. The active site involves lysine 33. A substrate-binding site is contributed by serine 37. A Mg(2+)-binding site is contributed by glutamate 100. ATP is bound by residues 100 to 103 (EGAG) and 184 to 186 (PRL).

It belongs to the dethiobiotin synthetase family. As to quaternary structure, homodimer. Requires Mg(2+) as cofactor.

It is found in the cytoplasm. It carries out the reaction (7R,8S)-7,8-diammoniononanoate + CO2 + ATP = (4R,5S)-dethiobiotin + ADP + phosphate + 3 H(+). It participates in cofactor biosynthesis; biotin biosynthesis; biotin from 7,8-diaminononanoate: step 1/2. Functionally, catalyzes a mechanistically unusual reaction, the ATP-dependent insertion of CO2 between the N7 and N8 nitrogen atoms of 7,8-diaminopelargonic acid (DAPA, also called 7,8-diammoniononanoate) to form a ureido ring. The polypeptide is ATP-dependent dethiobiotin synthetase BioD (Rhodopseudomonas palustris (strain TIE-1)).